The primary structure comprises 92 residues: MEVIADRLDDIVKQNIADEKFVDFVIHGLEHQCPAILRPLIRLFIDILLFVIVIYIFTVRLVSRNYQILLVLVALVITLTIFLLLYTIIVLD.

Transmembrane regions (helical) follow at residues 39 to 59 (PLIRLFIDILLFVIVIYIFTV) and 67 to 87 (QILLVLVALVITLTIFLLLYT).

Belongs to the orthopoxvirus OPG096 family. Interacts with OPG158.

It localises to the virion membrane. It is found in the host cytoplasm. The protein resides in the host endoplasmic reticulum membrane. Functionally, early protein involved in virion morphogenesis. Participates in the formation and elongation of crescent-shaped membrane precursors of immature virions in cytoplasmic factories. This Monkeypox virus protein is Protein OPG096 (OPG096).